A 226-amino-acid chain; its full sequence is MSKLLTESDSLKVIRRILEGSPKRRFNEAVDLVVVLRGIDLKRDPNAKINEVVELPHSPRNRKTKVAVIGKGEFLSKAKEAGADRVLEPEEIEAIAANKRALKKLANEYDFFIAQADVLPKIVKYIGPVLGPRNKMPINLPAMAVSQLPDLIEKLRRSVRIRTKDQPIIHTKVGSRDMKPEEIVENIRAVLSAIERKYEDPSKISRVYVKTTMGPAEELPLAAGRR.

Belongs to the universal ribosomal protein uL1 family. As to quaternary structure, part of the 50S ribosomal subunit.

In terms of biological role, binds directly to 23S rRNA. Probably involved in E site tRNA release. Functionally, protein L1 is also a translational repressor protein, it controls the translation of its operon by binding to its mRNA. The chain is Large ribosomal subunit protein uL1 from Korarchaeum cryptofilum (strain OPF8).